The chain runs to 188 residues: Quinone reductase (188 aa).

Residues S13 to N20, E82 to Y85, and S117 contribute to the FMN site.

Belongs to the SsuE family. In terms of assembly, homotetramer. Dimer of dimers. The tetrameric configuration has a central role in chromate reductase activity. Requires FMN as cofactor.

The catalysed reaction is a quinone + NADH + H(+) = a quinol + NAD(+). The enzyme catalyses a quinone + NADPH + H(+) = a quinol + NADP(+). It catalyses the reaction Cr(6+) + 2 NADH + O2 = Cr(3+) + superoxide + 2 NAD(+) + 2 H(+). It carries out the reaction Cr(6+) + 2 NADPH + O2 = Cr(3+) + superoxide + 2 NADP(+) + 2 H(+). Functionally, catalyzes the reduction of quinones. Acts by simultaneous two-electron transfer, avoiding formation of highly reactive semiquinone intermediates and producing quinols that promote tolerance of H(2)O(2). Quinone reduction is probably the primary biological role of ChrR. Can also reduce toxic chromate to insoluble and less toxic Cr(3+). Catalyzes the transfer of three electrons to Cr(6+) producing Cr(3+) and one electron to molecular oxygen without producing the toxic Cr(5+) species and only producing a minimal amount of reactive oxygen species (ROS). Chromate reduction protects the cell against chromate toxicity, but is likely a secondary activity. This chain is Quinone reductase (chrR), found in Escherichia coli O157:H7.